Consider the following 448-residue polypeptide: Chaperone SurA (448 aa).

The signal sequence occupies residues 1 to 27 (MKKTLRFAAVASGLVASLITVAPSASA). PpiC domains follow at residues 185–288 (QQDL…RLVE) and 301–399 (IVQT…QVLG).

It localises to the periplasm. The catalysed reaction is [protein]-peptidylproline (omega=180) = [protein]-peptidylproline (omega=0). Chaperone involved in the correct folding and assembly of outer membrane proteins. Recognizes specific patterns of aromatic residues and the orientation of their side chains, which are found more frequently in integral outer membrane proteins. May act in both early periplasmic and late outer membrane-associated steps of protein maturation. The protein is Chaperone SurA of Burkholderia mallei (strain ATCC 23344).